Reading from the N-terminus, the 261-residue chain is Pantothenate synthetase (261 aa).

Position 29–36 (29–36 (MGALHNGH)) interacts with ATP. The active-site Proton donor is the His36. Gln60 provides a ligand contact to (R)-pantoate. A beta-alanine-binding site is contributed by Gln60. 147–150 (GEKD) is a binding site for ATP. Gln153 is a binding site for (R)-pantoate. ATP is bound at residue 184–187 (LSSR).

It belongs to the pantothenate synthetase family. Homodimer.

The protein resides in the cytoplasm. It catalyses the reaction (R)-pantoate + beta-alanine + ATP = (R)-pantothenate + AMP + diphosphate + H(+). It functions in the pathway cofactor biosynthesis; (R)-pantothenate biosynthesis; (R)-pantothenate from (R)-pantoate and beta-alanine: step 1/1. In terms of biological role, catalyzes the condensation of pantoate with beta-alanine in an ATP-dependent reaction via a pantoyl-adenylate intermediate. This is Pantothenate synthetase from Francisella philomiragia subsp. philomiragia (strain ATCC 25017 / CCUG 19701 / FSC 153 / O#319-036).